The primary structure comprises 470 residues: MATFLSEDFLLGNEFARRLYHDYAADQPIFDYHCHLPPEQIAENTRFKNLYEIWLKGDHYKWRAMRTNGVAERLCTGDAGDREKFDAWAATVPHTIGNPLYHWTHLELRRPFGITGTLLSPTTADDIWQRGNALLAQDDFRARGIMQQMNVKMVGTTDDPIDDLRHHKAIAADSSFDIKVLPSWRPDKAFNIDAPGFNDYLQKLEAAADINIGRFSALCDALKKRMDHFAAHGCKVADHALDVVVYGEADESTLDAILTARLSGKLPTPEQSAQFKSAVLLFLAAEYQRREWVQQYHIGALRNNNSRMLASVGPDIGFDSINDRPLAEALSRLLDAQARQGGLPKTILYCLNPRDNEVIGTMVGNFQGEGTPGKMQFGSGWWFNDQKDGMQRQMTQLAQLGLLSRFVGMLTDSRSFLSYTRHEYFRRILCQMIGGWVENGEAPADITLLGEMVKNICFDNAKNYFAIELA.

The protein belongs to the metallo-dependent hydrolases superfamily. Uronate isomerase family.

It carries out the reaction D-glucuronate = D-fructuronate. The catalysed reaction is aldehydo-D-galacturonate = keto-D-tagaturonate. It functions in the pathway carbohydrate metabolism; pentose and glucuronate interconversion. In Serratia proteamaculans (strain 568), this protein is Uronate isomerase.